Reading from the N-terminus, the 640-residue chain is Pleckstrin homology-like domain family B member 3 (640 aa).

5 disordered regions span residues 1–100, 162–189, 241–262, 387–412, and 476–504; these read MGTR…AARR, LEQQ…ERDR, LERE…VPDP, GLQR…RPLS, and REGT…PHPP. A compositionally biased stretch (low complexity) spans 76-90; it reads PPIAMAATPPASTSS. The stretch at 104-327 forms a coiled coil; the sequence is QQLEALTRVA…ERSRLLELNC (224 aa). Positions 170–189 are enriched in basic and acidic residues; it reads QRGRQQREQEQRRLSQERDR. A coiled-coil region spans residues 454-481; it reads DIAHMERLLQQAMAERERLLKAREGTRR. The segment covering 495–504 has biased composition (pro residues); it reads TAPPTPPHPP. Positions 532–635 constitute a PH domain; it reads GCCCRGPLVK…WMDVIVTAAD (104 aa).

This Homo sapiens (Human) protein is Pleckstrin homology-like domain family B member 3 (PHLDB3).